Consider the following 131-residue polypeptide: Profilin-2 (131 aa).

It belongs to the profilin family. As to quaternary structure, occurs in many kinds of cells as a complex with monomeric actin in a 1:1 ratio.

The protein resides in the cytoplasm. It is found in the cytoskeleton. Its function is as follows. Binds to actin and affects the structure of the cytoskeleton. At high concentrations, profilin prevents the polymerization of actin, whereas it enhances it at low concentrations. By binding to PIP2, it inhibits the formation of IP3 and DG. The polypeptide is Profilin-2 (Ambrosia artemisiifolia (Common ragweed)).